The sequence spans 733 residues: EF-hand domain-containing family member C2 (733 aa).

DM10 domains are found at residues Asp-61–Gly-168, Asp-212–Tyr-354, and Ile-416–Ser-523.

As to quaternary structure, microtubule inner protein component of sperm flagellar doublet microtubules. In terms of tissue distribution, expressed in trachea multiciliated cells.

The protein resides in the cytoplasm. The protein localises to the cytoskeleton. Its subcellular location is the cilium axoneme. It is found in the flagellum axoneme. Its function is as follows. Microtubule inner protein (MIP) part of the dynein-decorated doublet microtubules (DMTs) in cilia axoneme, which is required for motile cilia beating. The chain is EF-hand domain-containing family member C2 (EFHC2) from Bos taurus (Bovine).